The chain runs to 281 residues: Pantothenate synthetase (281 aa).

30-37 (MGYYHAGH) contacts ATP. Catalysis depends on histidine 37, which acts as the Proton donor. Glutamine 61 contacts (R)-pantoate. Glutamine 61 lines the beta-alanine pocket. 147 to 150 (GEKD) provides a ligand contact to ATP. Glutamine 153 contacts (R)-pantoate. ATP is bound by residues valine 176 and 184-187 (MSSR).

The protein belongs to the pantothenate synthetase family. As to quaternary structure, homodimer.

The protein localises to the cytoplasm. The catalysed reaction is (R)-pantoate + beta-alanine + ATP = (R)-pantothenate + AMP + diphosphate + H(+). Its pathway is cofactor biosynthesis; (R)-pantothenate biosynthesis; (R)-pantothenate from (R)-pantoate and beta-alanine: step 1/1. In terms of biological role, catalyzes the condensation of pantoate with beta-alanine in an ATP-dependent reaction via a pantoyl-adenylate intermediate. The chain is Pantothenate synthetase from Oleidesulfovibrio alaskensis (strain ATCC BAA-1058 / DSM 17464 / G20) (Desulfovibrio alaskensis).